Reading from the N-terminus, the 142-residue chain is uncharacterized protein (142 aa).

This is an uncharacterized protein from Methanocaldococcus jannaschii (strain ATCC 43067 / DSM 2661 / JAL-1 / JCM 10045 / NBRC 100440) (Methanococcus jannaschii).